The sequence spans 91 residues: Small ribosomal subunit protein uS15 (91 aa).

This sequence belongs to the universal ribosomal protein uS15 family. Part of the 30S ribosomal subunit. Forms a bridge to the 50S subunit in the 70S ribosome, contacting the 23S rRNA.

One of the primary rRNA binding proteins, it binds directly to 16S rRNA where it helps nucleate assembly of the platform of the 30S subunit by binding and bridging several RNA helices of the 16S rRNA. In terms of biological role, forms an intersubunit bridge (bridge B4) with the 23S rRNA of the 50S subunit in the ribosome. The polypeptide is Small ribosomal subunit protein uS15 (Rickettsia bellii (strain OSU 85-389)).